The chain runs to 161 residues: Regulator of ribonuclease activity A (161 aa).

It belongs to the RraA family. In terms of assembly, homotrimer. Binds to both RNA-binding sites in the C-terminal region of Rne and to RhlB.

Its subcellular location is the cytoplasm. Globally modulates RNA abundance by binding to RNase E (Rne) and regulating its endonucleolytic activity. Can modulate Rne action in a substrate-dependent manner by altering the composition of the degradosome. Modulates RNA-binding and helicase activities of the degradosome. The chain is Regulator of ribonuclease activity A from Yersinia pseudotuberculosis serotype O:1b (strain IP 31758).